Reading from the N-terminus, the 443-residue chain is Probable D-serine dehydratase (443 aa).

Position 116 is an N6-(pyridoxal phosphate)lysine (lysine 116).

The protein belongs to the serine/threonine dehydratase family. DsdA subfamily. Requires pyridoxal 5'-phosphate as cofactor.

The enzyme catalyses D-serine = pyruvate + NH4(+). The polypeptide is Probable D-serine dehydratase (Bacillus cereus (strain AH187)).